Consider the following 229-residue polypeptide: Putative N-acetylmannosamine-6-phosphate 2-epimerase (229 aa).

Belongs to the NanE family.

The catalysed reaction is an N-acyl-D-glucosamine 6-phosphate = an N-acyl-D-mannosamine 6-phosphate. It functions in the pathway amino-sugar metabolism; N-acetylneuraminate degradation; D-fructose 6-phosphate from N-acetylneuraminate: step 3/5. Functionally, converts N-acetylmannosamine-6-phosphate (ManNAc-6-P) to N-acetylglucosamine-6-phosphate (GlcNAc-6-P). The sequence is that of Putative N-acetylmannosamine-6-phosphate 2-epimerase from Salmonella arizonae (strain ATCC BAA-731 / CDC346-86 / RSK2980).